The primary structure comprises 476 residues: Proline--tRNA ligase (476 aa).

The protein belongs to the class-II aminoacyl-tRNA synthetase family. ProS type 3 subfamily. Homodimer.

The protein localises to the cytoplasm. The catalysed reaction is tRNA(Pro) + L-proline + ATP = L-prolyl-tRNA(Pro) + AMP + diphosphate. Its function is as follows. Catalyzes the attachment of proline to tRNA(Pro) in a two-step reaction: proline is first activated by ATP to form Pro-AMP and then transferred to the acceptor end of tRNA(Pro). This is Proline--tRNA ligase from Cenarchaeum symbiosum (strain A).